Reading from the N-terminus, the 610-residue chain is UvrABC system protein C (610 aa).

Residues 16-94 (SQPGVYRMYD…IKLYQPRYNV (79 aa)) form the GIY-YIG domain. Residues 204 to 239 (DQVLTQLISRMETASQNLEFEEAARIRDQIQAVRRV) enclose the UVR domain.

It belongs to the UvrC family. As to quaternary structure, interacts with UvrB in an incision complex.

It is found in the cytoplasm. In terms of biological role, the UvrABC repair system catalyzes the recognition and processing of DNA lesions. UvrC both incises the 5' and 3' sides of the lesion. The N-terminal half is responsible for the 3' incision and the C-terminal half is responsible for the 5' incision. The protein is UvrABC system protein C of Escherichia coli O139:H28 (strain E24377A / ETEC).